The primary structure comprises 239 residues: Ribosomal RNA small subunit methyltransferase G (239 aa).

S-adenosyl-L-methionine contacts are provided by residues glycine 77, phenylalanine 82, 128 to 129 (AE), and arginine 146. The interval 215-239 (DKRSQTPKKYPRKPGTPNKSPLLEK) is disordered.

The protein belongs to the methyltransferase superfamily. RNA methyltransferase RsmG family.

The protein localises to the cytoplasm. Specifically methylates the N7 position of guanine in position 535 of 16S rRNA. The sequence is that of Ribosomal RNA small subunit methyltransferase G from Staphylococcus saprophyticus subsp. saprophyticus (strain ATCC 15305 / DSM 20229 / NCIMB 8711 / NCTC 7292 / S-41).